The sequence spans 547 residues: Inositol-tetrakisphosphate 1-kinase 6 (547 aa).

Lys263 provides a ligand contact to 1D-myo-inositol 1,3,4-trisphosphate. ATP is bound by residues Arg317 and Lys370. Residues Leu327 to Glu539 form the ATP-grasp domain. The 1D-myo-inositol 1,3,4-trisphosphate site is built by His381 and Lys415. Residues Gln404 to Lys415, Ser430, and Ser450 each bind ATP. Positions 497, 511, and 513 each coordinate Mg(2+). Residues Asn513 and Ser517 each coordinate 1D-myo-inositol 1,3,4-trisphosphate.

It belongs to the ITPK1 family. In terms of assembly, monomer. Requires Mg(2+) as cofactor. Highly expressed in embryos and at lower levels in roots, leaves, flowers and anthers.

The enzyme catalyses 1D-myo-inositol 3,4,5,6-tetrakisphosphate + ATP = 1D-myo-inositol 1,3,4,5,6-pentakisphosphate + ADP + H(+). The catalysed reaction is 1D-myo-inositol 1,3,4-trisphosphate + ATP = 1D-myo-inositol 1,3,4,5-tetrakisphosphate + ADP + H(+). It carries out the reaction 1D-myo-inositol 1,3,4-trisphosphate + ATP = 1D-myo-inositol 1,3,4,6-tetrakisphosphate + ADP + H(+). Kinase that can phosphorylate various inositol polyphosphate such as Ins(3,4,5,6)P4 or Ins(1,3,4)P3 and participates in phytic acid biosynthesis in developing seeds. Phytic acid is the primary storage form of phosphorus in cereal grains and other plant seeds. In Oryza sativa subsp. japonica (Rice), this protein is Inositol-tetrakisphosphate 1-kinase 6 (ITPK6).